A 226-amino-acid chain; its full sequence is Deoxyribose-phosphate aldolase (226 aa).

Aspartate 84 functions as the Proton donor/acceptor in the catalytic mechanism. Residue lysine 146 is the Schiff-base intermediate with acetaldehyde of the active site. Lysine 188 functions as the Proton donor/acceptor in the catalytic mechanism.

This sequence belongs to the DeoC/FbaB aldolase family. DeoC type 1 subfamily. As to quaternary structure, homodimer.

It localises to the cytoplasm. It catalyses the reaction 2-deoxy-D-ribose 5-phosphate = D-glyceraldehyde 3-phosphate + acetaldehyde. The protein operates within carbohydrate degradation; 2-deoxy-D-ribose 1-phosphate degradation; D-glyceraldehyde 3-phosphate and acetaldehyde from 2-deoxy-alpha-D-ribose 1-phosphate: step 2/2. In terms of biological role, catalyzes a reversible aldol reaction between acetaldehyde and D-glyceraldehyde 3-phosphate to generate 2-deoxy-D-ribose 5-phosphate. The chain is Deoxyribose-phosphate aldolase from Pyrobaculum aerophilum (strain ATCC 51768 / DSM 7523 / JCM 9630 / CIP 104966 / NBRC 100827 / IM2).